Consider the following 163-residue polypeptide: Large ribosomal subunit protein uL10 (163 aa).

Belongs to the universal ribosomal protein uL10 family. In terms of assembly, part of the ribosomal stalk of the 50S ribosomal subunit. The N-terminus interacts with L11 and the large rRNA to form the base of the stalk. The C-terminus forms an elongated spine to which L12 dimers bind in a sequential fashion forming a multimeric L10(L12)X complex.

Forms part of the ribosomal stalk, playing a central role in the interaction of the ribosome with GTP-bound translation factors. The polypeptide is Large ribosomal subunit protein uL10 (Haemophilus influenzae (strain 86-028NP)).